The primary structure comprises 98 residues: NADH-ubiquinone oxidoreductase chain 4L (98 aa).

Helical transmembrane passes span 1–21, 29–49, and 61–81; these read MSMV…GLLI, SLLC…VTIL, and IILL…LVMV.

This sequence belongs to the complex I subunit 4L family. As to quaternary structure, core subunit of respiratory chain NADH dehydrogenase (Complex I) which is composed of 45 different subunits.

The protein localises to the mitochondrion inner membrane. It carries out the reaction a ubiquinone + NADH + 5 H(+)(in) = a ubiquinol + NAD(+) + 4 H(+)(out). In terms of biological role, core subunit of the mitochondrial membrane respiratory chain NADH dehydrogenase (Complex I) which catalyzes electron transfer from NADH through the respiratory chain, using ubiquinone as an electron acceptor. Part of the enzyme membrane arm which is embedded in the lipid bilayer and involved in proton translocation. This chain is NADH-ubiquinone oxidoreductase chain 4L (MT-ND4L), found in Taxidea taxus (American badger).